Consider the following 128-residue polypeptide: Glycine cleavage system H protein (128 aa).

The Lipoyl-binding domain maps to 22 to 104 (AIVVGITDFA…YEEGWMITIE (83 aa)). Lys63 carries the post-translational modification N6-lipoyllysine.

This sequence belongs to the GcvH family. As to quaternary structure, the glycine cleavage system is composed of four proteins: P, T, L and H. (R)-lipoate serves as cofactor.

Functionally, the glycine cleavage system catalyzes the degradation of glycine. The H protein shuttles the methylamine group of glycine from the P protein to the T protein. The polypeptide is Glycine cleavage system H protein (Anaeromyxobacter dehalogenans (strain 2CP-1 / ATCC BAA-258)).